We begin with the raw amino-acid sequence, 165 residues long: MATVTSSAAVAIPSFAGLKASSTTRAATVKVAVATPRMSIKASLKDVGVVVAATAAAGILAGNAMAAEVLLGSSDGGLAFVPSDLSIASGEKITFKNNAGFPHNVVFDEDEVPAGVDVTKISMPEEDLLNAPGEEYSVTLTEKGTYKFYCAPHAGAGMVGKVTVN.

Residues 1 to 66 constitute a chloroplast transit peptide; the sequence is MATVTSSAAV…AGILAGNAMA (66 aa). One can recognise a Plastocyanin-like domain in the interval 67-165; the sequence is AEVLLGSSDG…AGMVGKVTVN (99 aa). His103, Cys150, His153, and Met158 together coordinate Cu cation.

It belongs to the plastocyanin family. The cofactor is Cu(2+).

It localises to the plastid. Its subcellular location is the chloroplast thylakoid membrane. Functionally, participates in electron transfer between P700 and the cytochrome b6-f complex in photosystem I. The chain is Plastocyanin, chloroplastic (PETE) from Silene latifolia subsp. alba (White campion).